The chain runs to 173 residues: MTYFVLFLGLCFVLGGLAVASNPSPYYGVVGLVLASVAGCGWLLSLGVSFVSLVLFMVYLGGMLVVFVYSVSLAADPFPEAWGDWGVVGYGVGFVVVLVAGLIVGGSIGSLDFGVVTVDSVGMFSVRLDFGGVAMFYSCGVGMLLVAGWGLLLTLFVVLELVRGLSRGAIRAV.

The next 6 membrane-spanning stretches (helical) occupy residues 1 to 21 (MTYF…AVAS), 27 to 47 (YGVV…LSLG), 48 to 68 (VSFV…VVFV), 85 to 105 (WGVV…LIVG), 106 to 126 (GSIG…MFSV), and 139 to 159 (CGVG…FVVL).

Belongs to the complex I subunit 6 family.

The protein localises to the mitochondrion membrane. It carries out the reaction a ubiquinone + NADH + 5 H(+)(in) = a ubiquinol + NAD(+) + 4 H(+)(out). In terms of biological role, core subunit of the mitochondrial membrane respiratory chain NADH dehydrogenase (Complex I) that is believed to belong to the minimal assembly required for catalysis. Complex I functions in the transfer of electrons from NADH to the respiratory chain. The immediate electron acceptor for the enzyme is believed to be ubiquinone. The chain is NADH-ubiquinone oxidoreductase chain 6 (MT-ND6) from Aethia psittacula (Parakeet auklet).